Here is a 315-residue protein sequence, read N- to C-terminus: Acetyl-coenzyme A carboxylase carboxyl transferase subunit alpha (315 aa).

Positions 32-289 (EIDLLEASLE…KQAFVDQLEQ (258 aa)) constitute a CoA carboxyltransferase C-terminal domain.

The protein belongs to the AccA family. In terms of assembly, acetyl-CoA carboxylase is a heterohexamer composed of biotin carboxyl carrier protein (AccB), biotin carboxylase (AccC) and two subunits each of ACCase subunit alpha (AccA) and ACCase subunit beta (AccD).

It is found in the cytoplasm. It catalyses the reaction N(6)-carboxybiotinyl-L-lysyl-[protein] + acetyl-CoA = N(6)-biotinyl-L-lysyl-[protein] + malonyl-CoA. It participates in lipid metabolism; malonyl-CoA biosynthesis; malonyl-CoA from acetyl-CoA: step 1/1. Component of the acetyl coenzyme A carboxylase (ACC) complex. First, biotin carboxylase catalyzes the carboxylation of biotin on its carrier protein (BCCP) and then the CO(2) group is transferred by the carboxyltransferase to acetyl-CoA to form malonyl-CoA. The protein is Acetyl-coenzyme A carboxylase carboxyl transferase subunit alpha of Staphylococcus haemolyticus (strain JCSC1435).